Reading from the N-terminus, the 669-residue chain is Carnitine O-palmitoyltransferase 2, mitochondrial (669 aa).

Residues 1-36 constitute a mitochondrion transit peptide; the sequence is MMAGLLSTQCNSTLSKLKHLSNNPALSVLTSTHRKY. At 37–190 the chain is on the mitochondrial matrix side; the sequence is SSKDGAGSEY…GLLEPEVFHL (154 aa). The note=Mitochondrial inner membrane intramembrane region spans 191–220; sequence NPAKSDTDSFKKLIRWVPPSISWFGAYMVN. Over 221–669 the chain is Mitochondrial matrix; the sequence is AYPLDMSQYF…FTVLDGNPIH (449 aa). Residue H384 is the Proton acceptor of the active site. 464 to 476 contributes to the CoA binding site; that stretch reads GKEQLKKKKLSPD. The (R)-carnitine site is built by Y498, S500, and T511.

Belongs to the carnitine/choline acetyltransferase family.

The protein resides in the mitochondrion inner membrane. It catalyses the reaction (R)-carnitine + hexadecanoyl-CoA = O-hexadecanoyl-(R)-carnitine + CoA. The catalysed reaction is octanoyl-CoA + (R)-carnitine = O-octanoyl-(R)-carnitine + CoA. The enzyme catalyses decanoyl-CoA + (R)-carnitine = O-decanoyl-(R)-carnitine + CoA. It carries out the reaction dodecanoyl-CoA + (R)-carnitine = O-dodecanoyl-R-carnitine + CoA. It catalyses the reaction tetradecanoyl-CoA + (R)-carnitine = O-tetradecanoyl-(R)-carnitine + CoA. The catalysed reaction is (R)-carnitine + octadecanoyl-CoA = O-octadecanoyl-(R)-carnitine + CoA. The enzyme catalyses eicosanoyl-CoA + (R)-carnitine = O-eicosanoyl-(R)-carnitine + CoA. It carries out the reaction (9Z)-tetradecenoyl-CoA + (R)-carnitine = O-(9Z)-tetradecenoyl-(R)-carnitine + CoA. It catalyses the reaction (5Z)-tetradecenoyl-CoA + (R)-carnitine = O-(5Z)-tetradecenoyl-(R)-carnitine + CoA. The catalysed reaction is (R)-carnitine + (9Z)-octadecenoyl-CoA = O-(9Z)-octadecenoyl-(R)-carnitine + CoA. The enzyme catalyses 4,8-dimethylnonanoyl-CoA + (R)-carnitine = O-4,8-dimethylnonanoyl-(R)-carnitine + CoA. It participates in lipid metabolism; fatty acid beta-oxidation. In terms of biological role, involved in the intramitochondrial synthesis of acylcarnitines from accumulated acyl-CoA metabolites. Reconverts acylcarnitines back into the respective acyl-CoA esters that can then undergo beta-oxidation, an essential step for the mitochondrial uptake of long-chain fatty acids and their subsequent beta-oxidation in the mitochondrion. Active with medium (C8-C12) and long-chain (C14-C18) acyl-CoA esters. The chain is Carnitine O-palmitoyltransferase 2, mitochondrial (cpt2) from Danio rerio (Zebrafish).